Consider the following 297-residue polypeptide: Acetylglutamate kinase (297 aa).

Substrate contacts are provided by residues 68–69 (GG), Arg-90, and Asn-189.

Belongs to the acetylglutamate kinase family. ArgB subfamily.

Its subcellular location is the cytoplasm. It carries out the reaction N-acetyl-L-glutamate + ATP = N-acetyl-L-glutamyl 5-phosphate + ADP. It functions in the pathway amino-acid biosynthesis; L-arginine biosynthesis; N(2)-acetyl-L-ornithine from L-glutamate: step 2/4. Its function is as follows. Catalyzes the ATP-dependent phosphorylation of N-acetyl-L-glutamate. The polypeptide is Acetylglutamate kinase (Akkermansia muciniphila (strain ATCC BAA-835 / DSM 22959 / JCM 33894 / BCRC 81048 / CCUG 64013 / CIP 107961 / Muc)).